We begin with the raw amino-acid sequence, 366 residues long: Aminomethyltransferase (366 aa).

The protein belongs to the GcvT family. As to quaternary structure, the glycine cleavage system is composed of four proteins: P, T, L and H.

It catalyses the reaction N(6)-[(R)-S(8)-aminomethyldihydrolipoyl]-L-lysyl-[protein] + (6S)-5,6,7,8-tetrahydrofolate = N(6)-[(R)-dihydrolipoyl]-L-lysyl-[protein] + (6R)-5,10-methylene-5,6,7,8-tetrahydrofolate + NH4(+). The glycine cleavage system catalyzes the degradation of glycine. This is Aminomethyltransferase from Bordetella avium (strain 197N).